The sequence spans 62 residues: DNA-binding protein 7 (62 aa).

This sequence belongs to the 7 kDa DNA-binding/endoribonuclease P2 family. In terms of assembly, monomer.

It localises to the cytoplasm. Functionally, can constrain negative DNA supercoils. May be involved in maintaining the integrity of the genome at high temperature. The protein is DNA-binding protein 7 of Metallosphaera sedula (strain ATCC 51363 / DSM 5348 / JCM 9185 / NBRC 15509 / TH2).